Consider the following 738-residue polypeptide: MKKLLTSLMLSTASFMLLLTVSNKAYAYEETETFTFEIYNMNSVVANPGLYNYLVDLTDGYGYGQMQHVTVDISLLDYNTAYLEKNLNGFNLFFTSDTGVYEFGIDASGNIELLNDPVAHDEYSLTFTGLNNAYQDLFYEEIVVEFEIVSFDSLEGVGTLDPNPYVVLSELLTENYEYNETIAPFIWVNDVQYQNYYSVYDIGSDLALIEIDGPTLNIYSDRFEEYNETFDVGDEFRIIFKIYKTWTQAHDYGRIRTNASTLYLNQQSDTSALLSHSESTNVINVNNIAVGDEIVMQSPYTDFSVSYGNVGFPRTYLVEQENIAAVKMIKNSSDNTNYTFILFYWENGSVVSRTVNNINLANRNSLNIKFDGGFRKALNYSDVMVANVDLLTPLEDFLPNMVAWDAIDGDISDSIVITDNDGYSPDTVGIYNVEFSVTNSNGQTSSIIAPVHVVDIVNPVINGVSDTVHISYDQTFNVTNWVNSLTVSDNYYTGLSISIKENTYTVNKNKLGTYKITVQAVDPSGNIGTLTRTIVVNDGIGPVFNGINTITASINENITVEQIKAGLAAIDAIDGNVTTSIVVDSDNLTGKANTVGVYEVVFRAVDAAGNQTFHTVTVSIVASPPGFYILNSNSVRLLPGANLTIEQILNILNASDAENISTNYTVSVPGTYNLSFTLYGESHQVSITVLGQNDSIIPTPVIPGESNPGFNITYALIIGLSAIALLATTVTILNKKRK.

The N-terminal stretch at 1–27 (MKKLLTSLMLSTASFMLLLTVSNKAYA) is a signal peptide. A run of 2 helical transmembrane segments spans residues 612 to 632 (TFHT…ILNS) and 712 to 732 (ITYA…TVTI).

The protein resides in the membrane. This is an uncharacterized protein from Mycoplasma (Bacteriophage L2).